We begin with the raw amino-acid sequence, 267 residues long: MSELKNGTTEPKKNETTQSDSKSKSTSTNKSSVPPASLVPVQPTALTSRDKTTQRLIVVLSQACLETYKMNSGGPGGDRFALLNCDDHQGLLRKMGRDIAEARPDITHQCLLTLLDSPINKAGRLQVYIQTARGVLIEVNPSVRIPRTFKRFSGLMVQLLHKLSIRSENSKEVLLKVIKNPITDHLPTKCRKVTLSFDAELKRVQDYVTTLDENESICVFVGAMARGKDNFADEFVDEKIGLSDYPLSASVACSKFCHGCEDVWGIY.

Residues 1 to 46 (MSELKNGTTEPKKNETTQSDSKSKSTSTNKSSVPPASLVPVQPTAL) form a disordered region. Residues 16–32 (TTQSDSKSKSTSTNKSS) show a composition bias toward low complexity. Residues Leu195, Gly222, 227–229 (GKD), and 242–247 (LSDYPL) contribute to the S-adenosyl-L-methionine site.

The protein belongs to the class IV-like SAM-binding methyltransferase superfamily. RNA methyltransferase NEP1 family. Homodimer.

The protein resides in the nucleus. It localises to the nucleolus. It carries out the reaction a pseudouridine in rRNA + S-adenosyl-L-methionine = an N(1)-methylpseudouridine in rRNA + S-adenosyl-L-homocysteine + H(+). In terms of biological role, S-adenosyl-L-methionine-dependent pseudouridine N(1)-methyltransferase that methylates the pseudouridine corresponding to position 1189 (Psi1189) in S.cerevisiae 18S rRNA. Involved the biosynthesis of the hypermodified N1-methyl-N3-(3-amino-3-carboxypropyl) pseudouridine (m1acp3-Psi) conserved in eukaryotic 18S rRNA. Also has an essential role in 40S ribosomal subunit biogenesis independent on its methyltransferase activity, facilitating the incorporation of ribosomal protein S19 during the formation of pre-ribosomes. This Candida albicans (Yeast) protein is Ribosomal RNA small subunit methyltransferase NEP1.